The chain runs to 844 residues: Penicillin-binding protein 1B (844 aa).

The segment covering 1–10 (MAGNDREPIG) has biased composition (basic and acidic residues). The segment at 1–60 (MAGNDREPIGRKGKPTRPVKQKVSRRRYEDDDDYDDYDDYEDEEPMPRKGKGKGKGRKPR) is disordered. Over 1–63 (MAGNDREPIG…GKGRKPRGKR (63 aa)) the chain is Cytoplasmic. Over residues 11–25 (RKGKPTRPVKQKVSR) the composition is skewed to basic residues. Residues 30–44 (DDDDYDDYDDYEDEE) are compositionally biased toward acidic residues. Positions 48 to 60 (RKGKGKGKGRKPR) are enriched in basic residues. Residues 64-87 (GWLWLLLKLAIVFAVLIAIYGVYL) traverse the membrane as a helical; Signal-anchor for type II membrane protein segment. The tract at residues 88–250 (DQKIRSRIDG…DGISLYSIGR (163 aa)) is membrane association. The Periplasmic portion of the chain corresponds to 88 to 844 (DQKIRSRIDG…GWIKDMFGSN (757 aa)). The segment at 109-200 (RMVNLEPDMT…QFGFFRLDPR (92 aa)) is uvrB domain 2 homolog. The interval 195 to 367 (FRLDPRLITM…SIYNPWRNPK (173 aa)) is transglycosylase. Glu233 acts as the Proton donor; for transglycosylase activity in catalysis. A transpeptidase region spans residues 444 to 736 (SVAQDAAEKA…NNQPTKLYGA (293 aa)). Residue Ser510 is the Acyl-ester intermediate; for transpeptidase activity of the active site. Over residues 793-825 (LCQQSEMQQQPSGNPFDQSSQPQQQPQQQPAQQ) the composition is skewed to low complexity. A disordered region spans residues 793 to 835 (LCQQSEMQQQPSGNPFDQSSQPQQQPQQQPAQQEQKDSDGVAG).

It in the N-terminal section; belongs to the glycosyltransferase 51 family. This sequence in the C-terminal section; belongs to the transpeptidase family. Forms a trimeric complex with MipA and MltA. Has also been shown to exist as monomer or homodimer; homodimer of Alpha and Gamma isozymes can be found. Interacts with UvrA, FtsL and FtsN.

It is found in the cell inner membrane. It catalyses the reaction [GlcNAc-(1-&gt;4)-Mur2Ac(oyl-L-Ala-gamma-D-Glu-L-Lys-D-Ala-D-Ala)](n)-di-trans,octa-cis-undecaprenyl diphosphate + beta-D-GlcNAc-(1-&gt;4)-Mur2Ac(oyl-L-Ala-gamma-D-Glu-L-Lys-D-Ala-D-Ala)-di-trans,octa-cis-undecaprenyl diphosphate = [GlcNAc-(1-&gt;4)-Mur2Ac(oyl-L-Ala-gamma-D-Glu-L-Lys-D-Ala-D-Ala)](n+1)-di-trans,octa-cis-undecaprenyl diphosphate + di-trans,octa-cis-undecaprenyl diphosphate + H(+). The enzyme catalyses Preferential cleavage: (Ac)2-L-Lys-D-Ala-|-D-Ala. Also transpeptidation of peptidyl-alanyl moieties that are N-acyl substituents of D-alanine.. The protein operates within cell wall biogenesis; peptidoglycan biosynthesis. In terms of biological role, cell wall formation. Synthesis of cross-linked peptidoglycan from the lipid intermediates. The enzyme has a penicillin-insensitive transglycosylase N-terminal domain (formation of linear glycan strands) and a penicillin-sensitive transpeptidase C-terminal domain (cross-linking of the peptide subunits). This is Penicillin-binding protein 1B (mrcB) from Escherichia coli (strain K12).